The following is a 511-amino-acid chain: Probable DNA ligase (511 aa).

ATP is bound at residue Glu208. Residue Lys210 is the N6-AMP-lysine intermediate of the active site. Positions 215, 230, 259, 299, 377, and 383 each coordinate ATP.

The protein belongs to the ATP-dependent DNA ligase family. Mg(2+) is required as a cofactor.

The enzyme catalyses ATP + (deoxyribonucleotide)n-3'-hydroxyl + 5'-phospho-(deoxyribonucleotide)m = (deoxyribonucleotide)n+m + AMP + diphosphate.. DNA ligase that seals nicks in double-stranded DNA during DNA replication, DNA recombination and DNA repair. The protein is Probable DNA ligase of Streptomyces griseus subsp. griseus (strain JCM 4626 / CBS 651.72 / NBRC 13350 / KCC S-0626 / ISP 5235).